The following is a 224-amino-acid chain: Virulence transcriptional regulatory protein PhoP (224 aa).

The Response regulatory domain occupies 3-117 (RVLVVEDNAL…EVMARMQALM (115 aa)). 4-aspartylphosphate is present on D52. The ompR/PhoB-type DNA-binding region spans 125–223 (SQVINISPFQ…VRGQGYLFEL (99 aa)).

In terms of processing, phosphorylated by PhoQ.

It is found in the cytoplasm. In terms of biological role, member of the two-component regulatory system PhoQ/PhoP which regulates the expression of genes involved in virulence and resistance to host defense antimicrobial peptides. Promotes intramacrophage survival of S.typhi. Is required to enhance bacterial resistance to bile in the human intestinal cells. The protein is Virulence transcriptional regulatory protein PhoP (phoP) of Salmonella typhi.